Here is a 115-residue protein sequence, read N- to C-terminus: Large ribosomal subunit protein bL19 (115 aa).

It belongs to the bacterial ribosomal protein bL19 family.

Functionally, this protein is located at the 30S-50S ribosomal subunit interface and may play a role in the structure and function of the aminoacyl-tRNA binding site. In Streptococcus pneumoniae serotype 2 (strain D39 / NCTC 7466), this protein is Large ribosomal subunit protein bL19.